Here is a 119-residue protein sequence, read N- to C-terminus: Large ribosomal subunit protein uL22 (119 aa).

It belongs to the universal ribosomal protein uL22 family. In terms of assembly, part of the 50S ribosomal subunit.

Functionally, this protein binds specifically to 23S rRNA; its binding is stimulated by other ribosomal proteins, e.g. L4, L17, and L20. It is important during the early stages of 50S assembly. It makes multiple contacts with different domains of the 23S rRNA in the assembled 50S subunit and ribosome. Its function is as follows. The globular domain of the protein is located near the polypeptide exit tunnel on the outside of the subunit, while an extended beta-hairpin is found that lines the wall of the exit tunnel in the center of the 70S ribosome. This chain is Large ribosomal subunit protein uL22, found in Rickettsia conorii (strain ATCC VR-613 / Malish 7).